The following is a 205-amino-acid chain: Microtubule-associated protein Jupiter (205 aa).

The residue at position 30 (Ser-30) is a Phosphoserine. Residues Thr-41, Thr-98, and Thr-102 each carry the phosphothreonine modification. The span at 124–135 (LISNSKGNYNGK) shows a compositional bias: polar residues. The segment at 124–205 (LISNSKGNYN…PPGGYSSGLW (82 aa)) is disordered. The segment covering 136-149 (SGSVSSASSSVSSS) has biased composition (low complexity). Phosphoserine occurs at positions 138 and 149. Polar residues predominate over residues 181-191 (PANNGSSQVIN).

This sequence belongs to the MAP Jupiter family.

The protein resides in the nucleus. Its subcellular location is the cytoplasm. It localises to the cytoskeleton. It is found in the spindle. In terms of biological role, binds to all microtubule populations. In Drosophila virilis (Fruit fly), this protein is Microtubule-associated protein Jupiter.